The sequence spans 167 residues: Crossover junction endodeoxyribonuclease RuvC (167 aa).

Catalysis depends on residues D7, E67, and D140. 3 residues coordinate Mg(2+): D7, E67, and D140.

Belongs to the RuvC family. As to quaternary structure, homodimer which binds Holliday junction (HJ) DNA. The HJ becomes 2-fold symmetrical on binding to RuvC with unstacked arms; it has a different conformation from HJ DNA in complex with RuvA. In the full resolvosome a probable DNA-RuvA(4)-RuvB(12)-RuvC(2) complex forms which resolves the HJ. The cofactor is Mg(2+).

The protein resides in the cytoplasm. It catalyses the reaction Endonucleolytic cleavage at a junction such as a reciprocal single-stranded crossover between two homologous DNA duplexes (Holliday junction).. In terms of biological role, the RuvA-RuvB-RuvC complex processes Holliday junction (HJ) DNA during genetic recombination and DNA repair. Endonuclease that resolves HJ intermediates. Cleaves cruciform DNA by making single-stranded nicks across the HJ at symmetrical positions within the homologous arms, yielding a 5'-phosphate and a 3'-hydroxyl group; requires a central core of homology in the junction. The consensus cleavage sequence is 5'-(A/T)TT(C/G)-3'. Cleavage occurs on the 3'-side of the TT dinucleotide at the point of strand exchange. HJ branch migration catalyzed by RuvA-RuvB allows RuvC to scan DNA until it finds its consensus sequence, where it cleaves and resolves the cruciform DNA. The sequence is that of Crossover junction endodeoxyribonuclease RuvC from Moorella thermoacetica (strain ATCC 39073 / JCM 9320).